The following is a 218-amino-acid chain: Acetyl- and succinyl-CoA transferase MT0822 (218 aa).

One can recognise an N-acetyltransferase domain in the interval D32–D188. Substrate-binding positions include Q94, S109–L113, G119–T124, S145–N151, and R160.

Dimer of dimers.

It carries out the reaction L-lysyl-[protein] + acetyl-CoA = N(6)-acetyl-L-lysyl-[protein] + CoA + H(+). The catalysed reaction is succinyl-CoA + L-lysyl-[protein] = N(6)-succinyl-L-lysyl-[protein] + CoA + H(+). Its function is as follows. Acetylates and succinylates nucleoid-associated, DNA-binding protein HupB. This Mycobacterium tuberculosis (strain CDC 1551 / Oshkosh) protein is Acetyl- and succinyl-CoA transferase MT0822.